We begin with the raw amino-acid sequence, 119 residues long: Ribonuclease P protein component (119 aa).

The segment at 1–24 (MRGSSRFRPHEKLRASDDYQRVKR) is disordered. Over residues 8 to 21 (RPHEKLRASDDYQR) the composition is skewed to basic and acidic residues.

It belongs to the RnpA family. As to quaternary structure, consists of a catalytic RNA component (M1 or rnpB) and a protein subunit.

The enzyme catalyses Endonucleolytic cleavage of RNA, removing 5'-extranucleotides from tRNA precursor.. Its function is as follows. RNaseP catalyzes the removal of the 5'-leader sequence from pre-tRNA to produce the mature 5'-terminus. It can also cleave other RNA substrates such as 4.5S RNA. The protein component plays an auxiliary but essential role in vivo by binding to the 5'-leader sequence and broadening the substrate specificity of the ribozyme. In Syntrophobacter fumaroxidans (strain DSM 10017 / MPOB), this protein is Ribonuclease P protein component.